The following is a 107-amino-acid chain: Putative double-stranded DNA mimic protein Asuc_1259 (107 aa).

Belongs to the putative dsDNA mimic protein family.

In terms of biological role, may act as a double-stranded DNA (dsDNA) mimic. Probably regulates the activity of a dsDNA-binding protein. The sequence is that of Putative double-stranded DNA mimic protein Asuc_1259 from Actinobacillus succinogenes (strain ATCC 55618 / DSM 22257 / CCUG 43843 / 130Z).